The primary structure comprises 553 residues: Solute carrier family 45 member 3 (553 aa).

11 helical membrane passes run 19 to 39 (LLVN…ITYV), 52 to 72 (FMTM…PLLG), 88 to 108 (FIWA…RAGW), 120 to 140 (LELA…QVCF), 161 to 181 (YSVY…LPAI), 198 to 218 (CLFG…LLVA), 275 to 295 (FVAE…YTDF), 323 to 343 (MGSL…LVMD), 353 to 373 (AVYL…CLSH), 382 to 402 (AALT…LASL), and 522 to 542 (AYMV…TQVV).

This sequence belongs to the glycoside-pentoside-hexuronide (GPH) cation symporter transporter (TC 2.A.2) family. In terms of tissue distribution, prostate specific. Expressed in all prostatic glandular cells. Expressed both in normal and cancerous prostates.

It localises to the membrane. It carries out the reaction sucrose(out) + H(+)(out) = sucrose(in) + H(+)(in). In terms of biological role, proton-associated sucrose transporter. May be able to transport also glucose and fructose. In Homo sapiens (Human), this protein is Solute carrier family 45 member 3.